Reading from the N-terminus, the 245-residue chain is 2,3,4,5-tetrahydropyridine-2,6-dicarboxylate N-acetyltransferase (245 aa).

Belongs to the transferase hexapeptide repeat family. DapH subfamily.

It catalyses the reaction (S)-2,3,4,5-tetrahydrodipicolinate + acetyl-CoA + H2O = L-2-acetamido-6-oxoheptanedioate + CoA. It functions in the pathway amino-acid biosynthesis; L-lysine biosynthesis via DAP pathway; LL-2,6-diaminopimelate from (S)-tetrahydrodipicolinate (acetylase route): step 1/3. In terms of biological role, catalyzes the transfer of an acetyl group from acetyl-CoA to tetrahydrodipicolinate. The chain is 2,3,4,5-tetrahydropyridine-2,6-dicarboxylate N-acetyltransferase from Methanopyrus kandleri (strain AV19 / DSM 6324 / JCM 9639 / NBRC 100938).